The chain runs to 225 residues: Orotidine 5'-phosphate decarboxylase (225 aa).

Substrate-binding positions include Asp9, Lys31, 58 to 67 (DLKLHDIPNT), Thr115, Arg176, Gln184, Gly204, and Arg205. The Proton donor role is filled by Lys60.

It belongs to the OMP decarboxylase family. Type 1 subfamily. In terms of assembly, homodimer.

The enzyme catalyses orotidine 5'-phosphate + H(+) = UMP + CO2. It functions in the pathway pyrimidine metabolism; UMP biosynthesis via de novo pathway; UMP from orotate: step 2/2. Its function is as follows. Catalyzes the decarboxylation of orotidine 5'-monophosphate (OMP) to uridine 5'-monophosphate (UMP). The sequence is that of Orotidine 5'-phosphate decarboxylase from Wolbachia sp. subsp. Brugia malayi (strain TRS).